The sequence spans 439 residues: Serine hydroxymethyltransferase (439 aa).

(6S)-5,6,7,8-tetrahydrofolate-binding positions include Leu119 and 123–125 (GHL). Position 228 is an N6-(pyridoxal phosphate)lysine (Lys228). Residue 370–372 (SPF) coordinates (6S)-5,6,7,8-tetrahydrofolate.

This sequence belongs to the SHMT family. As to quaternary structure, homodimer. Pyridoxal 5'-phosphate serves as cofactor.

Its subcellular location is the cytoplasm. The enzyme catalyses (6R)-5,10-methylene-5,6,7,8-tetrahydrofolate + glycine + H2O = (6S)-5,6,7,8-tetrahydrofolate + L-serine. Its pathway is one-carbon metabolism; tetrahydrofolate interconversion. The protein operates within amino-acid biosynthesis; glycine biosynthesis; glycine from L-serine: step 1/1. Catalyzes the reversible interconversion of serine and glycine with tetrahydrofolate (THF) serving as the one-carbon carrier. This reaction serves as the major source of one-carbon groups required for the biosynthesis of purines, thymidylate, methionine, and other important biomolecules. Also exhibits THF-independent aldolase activity toward beta-hydroxyamino acids, producing glycine and aldehydes, via a retro-aldol mechanism. The chain is Serine hydroxymethyltransferase from Chlorobium phaeobacteroides (strain BS1).